Here is a 423-residue protein sequence, read N- to C-terminus: Protein IQ-DOMAIN 16 (423 aa).

IQ domains are found at residues 99–127 and 128–150; these read RHWA…GIVK and LQAL…CIKA. Residues 231-251 are a coiled coil; that stretch reads QKKLEIAIKREKAQALALSNQ. The calmodulin-binding stretch occupies residues 235–252; sequence EIAIKREKAQALALSNQI.

This sequence belongs to the IQD family. As to quaternary structure, binds to multiple calmodulin (CaM) in the presence of Ca(2+) and CaM-like proteins.

The protein localises to the cytoplasm. Its subcellular location is the cytoskeleton. The protein resides in the cell membrane. May be involved in cooperative interactions with calmodulins or calmodulin-like proteins. Recruits calmodulin proteins to microtubules, thus being a potential scaffold in cellular signaling and trafficking. Regulates cell shape and elongation in aerial organs (i.e. cotyledons, leaves, and hypocotyls) probably by regulating cortical microtubules (MT) arrays orientation. May associate with nucleic acids and regulate gene expression at the transcriptional or post-transcriptional level. The protein is Protein IQ-DOMAIN 16 of Arabidopsis thaliana (Mouse-ear cress).